We begin with the raw amino-acid sequence, 779 residues long: Pre-mRNA-splicing factor cef-1 (779 aa).

2 consecutive HTH myb-type domains span residues 1–56 (MPVV…DPSI) and 57–106 (KKIE…DEAE). 2 consecutive DNA-binding regions (H-T-H motif) follow at residues 29–52 (WARV…NEWL) and 80–102 (WRTI…QRLL). Disordered stretches follow at residues 113–192 (LGLT…ESRR), 246–284 (EYQR…PSVQ), 424–448 (TPLR…LRTP), and 497–525 (WELE…DRRE). The segment covering 127 to 152 (SADDVRKLRPGEVDPDPETKPARPDT) has biased composition (basic and acidic residues). Positions 157-204 (EDEKEMLSEARARLANTQGKKAKRKARERQQEESRRLAALQKRRELKT) form a coiled coil. Basic and acidic residues-rich tracts occupy residues 246–256 (EYQRAHFDPKK) and 263–281 (RKGE…DKDP). The stretch at 653–772 (DEEEEQISTM…EELDALTLNG (120 aa)) forms a coiled coil.

Belongs to the CEF1 family. In terms of assembly, associated with the spliceosome.

It is found in the cytoplasm. The protein resides in the nucleus. Functionally, involved in pre-mRNA splicing and cell cycle control. The sequence is that of Pre-mRNA-splicing factor cef-1 (cef-1) from Neurospora crassa (strain ATCC 24698 / 74-OR23-1A / CBS 708.71 / DSM 1257 / FGSC 987).